The chain runs to 229 residues: Orotate phosphoribosyltransferase (229 aa).

Residues Arg-107, Lys-108, Lys-111, His-113, and 133 to 141 (EDLTTAGGS) contribute to the 5-phospho-alpha-D-ribose 1-diphosphate site. Thr-137 contacts orotate.

The protein belongs to the purine/pyrimidine phosphoribosyltransferase family. PyrE subfamily. In terms of assembly, homodimer. Mg(2+) is required as a cofactor.

The catalysed reaction is orotidine 5'-phosphate + diphosphate = orotate + 5-phospho-alpha-D-ribose 1-diphosphate. Its pathway is pyrimidine metabolism; UMP biosynthesis via de novo pathway; UMP from orotate: step 1/2. In terms of biological role, catalyzes the transfer of a ribosyl phosphate group from 5-phosphoribose 1-diphosphate to orotate, leading to the formation of orotidine monophosphate (OMP). This chain is Orotate phosphoribosyltransferase, found in Rhizobium johnstonii (strain DSM 114642 / LMG 32736 / 3841) (Rhizobium leguminosarum bv. viciae).